The primary structure comprises 253 residues: Triosephosphate isomerase (253 aa).

9-11 (NWK) contributes to the substrate binding site. His95 acts as the Electrophile in catalysis. Residue Glu167 is the Proton acceptor of the active site. Residues Gly173, Ser213, and 234 to 235 (GG) each bind substrate. Phosphoserine is present on Ser213.

The protein belongs to the triosephosphate isomerase family. Homodimer.

The protein resides in the cytoplasm. The catalysed reaction is D-glyceraldehyde 3-phosphate = dihydroxyacetone phosphate. It functions in the pathway carbohydrate biosynthesis; gluconeogenesis. It participates in carbohydrate degradation; glycolysis; D-glyceraldehyde 3-phosphate from glycerone phosphate: step 1/1. Functionally, involved in the gluconeogenesis. Catalyzes stereospecifically the conversion of dihydroxyacetone phosphate (DHAP) to D-glyceraldehyde-3-phosphate (G3P). This Bacillus licheniformis (strain ATCC 14580 / DSM 13 / JCM 2505 / CCUG 7422 / NBRC 12200 / NCIMB 9375 / NCTC 10341 / NRRL NRS-1264 / Gibson 46) protein is Triosephosphate isomerase.